We begin with the raw amino-acid sequence, 722 residues long: Glycine--tRNA ligase beta subunit (722 aa).

Belongs to the class-II aminoacyl-tRNA synthetase family. In terms of assembly, tetramer of two alpha and two beta subunits.

It localises to the cytoplasm. The enzyme catalyses tRNA(Gly) + glycine + ATP = glycyl-tRNA(Gly) + AMP + diphosphate. The polypeptide is Glycine--tRNA ligase beta subunit (Haemophilus influenzae (strain 86-028NP)).